The sequence spans 132 residues: Small ribosomal subunit protein uS8 (132 aa).

This sequence belongs to the universal ribosomal protein uS8 family. In terms of assembly, part of the 30S ribosomal subunit. Contacts proteins S5 and S12.

One of the primary rRNA binding proteins, it binds directly to 16S rRNA central domain where it helps coordinate assembly of the platform of the 30S subunit. The sequence is that of Small ribosomal subunit protein uS8 from Mycobacterium leprae (strain Br4923).